The following is an 883-amino-acid chain: Phosphoenolpyruvate carboxylase (883 aa).

Residues His-138 and Lys-546 contribute to the active site.

It belongs to the PEPCase type 1 family. Requires Mg(2+) as cofactor.

It catalyses the reaction oxaloacetate + phosphate = phosphoenolpyruvate + hydrogencarbonate. In terms of biological role, forms oxaloacetate, a four-carbon dicarboxylic acid source for the tricarboxylic acid cycle. The polypeptide is Phosphoenolpyruvate carboxylase (Escherichia coli O45:K1 (strain S88 / ExPEC)).